Here is an 890-residue protein sequence, read N- to C-terminus: DNA mismatch repair protein MutS (890 aa).

607-614 (GPNMSGKS) serves as a coordination point for ATP. The interval 832 to 851 (ESQLSFFGTEQSSKKQDKPV) is disordered.

Belongs to the DNA mismatch repair MutS family.

In terms of biological role, this protein is involved in the repair of mismatches in DNA. It is possible that it carries out the mismatch recognition step. This protein has a weak ATPase activity. This Bacillus cereus (strain 03BB102) protein is DNA mismatch repair protein MutS.